The chain runs to 754 residues: 5-methyltetrahydropteroyltriglutamate--homocysteine methyltransferase (754 aa).

5-methyltetrahydropteroyltri-L-glutamate-binding positions include 15–18 (RELK) and lysine 114. Residues 430 to 432 (IGS) and glutamate 483 contribute to the L-homocysteine site. L-methionine-binding positions include 430-432 (IGS) and glutamate 483. Residues 514–515 (RC) and tryptophan 560 contribute to the 5-methyltetrahydropteroyltri-L-glutamate site. Aspartate 598 is an L-homocysteine binding site. Aspartate 598 serves as a coordination point for L-methionine. Glutamate 604 contacts 5-methyltetrahydropteroyltri-L-glutamate. Zn(2+) is bound by residues histidine 641, cysteine 643, and glutamate 665. The active-site Proton donor is the histidine 694. Cysteine 726 provides a ligand contact to Zn(2+).

The protein belongs to the vitamin-B12 independent methionine synthase family. Zn(2+) is required as a cofactor.

It catalyses the reaction 5-methyltetrahydropteroyltri-L-glutamate + L-homocysteine = tetrahydropteroyltri-L-glutamate + L-methionine. Its pathway is amino-acid biosynthesis; L-methionine biosynthesis via de novo pathway; L-methionine from L-homocysteine (MetE route): step 1/1. Functionally, catalyzes the transfer of a methyl group from 5-methyltetrahydrofolate to homocysteine resulting in methionine formation. The protein is 5-methyltetrahydropteroyltriglutamate--homocysteine methyltransferase of Campylobacter jejuni subsp. doylei (strain ATCC BAA-1458 / RM4099 / 269.97).